Consider the following 267-residue polypeptide: 3-methyl-2-oxobutanoate hydroxymethyltransferase (267 aa).

The Mg(2+) site is built by D45 and D84. Residues 45–46 (DS), D84, and K113 each bind 3-methyl-2-oxobutanoate. E115 provides a ligand contact to Mg(2+). E182 functions as the Proton acceptor in the catalytic mechanism.

The protein belongs to the PanB family. In terms of assembly, homodecamer; pentamer of dimers. Mg(2+) serves as cofactor.

It is found in the cytoplasm. The enzyme catalyses 3-methyl-2-oxobutanoate + (6R)-5,10-methylene-5,6,7,8-tetrahydrofolate + H2O = 2-dehydropantoate + (6S)-5,6,7,8-tetrahydrofolate. The protein operates within cofactor biosynthesis; coenzyme A biosynthesis. Catalyzes the reversible reaction in which hydroxymethyl group from 5,10-methylenetetrahydrofolate is transferred onto alpha-ketoisovalerate to form ketopantoate. This is 3-methyl-2-oxobutanoate hydroxymethyltransferase from Saccharolobus islandicus (strain L.S.2.15 / Lassen #1) (Sulfolobus islandicus).